Here is a 239-residue protein sequence, read N- to C-terminus: Purine nucleoside phosphorylase DeoD-type (239 aa).

A purine D-ribonucleoside is bound at residue H5. Phosphate-binding positions include G21, R25, R44, and 88–91; that span reads RVGS. Residues 180–182 and 204–205 each bind a purine D-ribonucleoside; these read EME and SD. The active-site Proton donor is D205.

It belongs to the PNP/UDP phosphorylase family. As to quaternary structure, homohexamer; trimer of homodimers.

The catalysed reaction is a purine D-ribonucleoside + phosphate = a purine nucleobase + alpha-D-ribose 1-phosphate. It catalyses the reaction a purine 2'-deoxy-D-ribonucleoside + phosphate = a purine nucleobase + 2-deoxy-alpha-D-ribose 1-phosphate. In terms of biological role, catalyzes the reversible phosphorolytic breakdown of the N-glycosidic bond in the beta-(deoxy)ribonucleoside molecules, with the formation of the corresponding free purine bases and pentose-1-phosphate. The polypeptide is Purine nucleoside phosphorylase DeoD-type (Myxococcus xanthus (strain DK1622)).